The sequence spans 715 residues: Transcription activator of gluconeogenesis MGYG_02011 (715 aa).

Over residues 1–14 (MSPHQTTGQESDNM) the composition is skewed to polar residues. The segment at 1–28 (MSPHQTTGQESDNMAVNGENAPASSQYI) is disordered. A DNA-binding region (zn(2)-C6 fungal-type) is located at residues 66-94 (CYACQRGHLTCGDERPCQRCIKRGFQDAC). Composition is skewed to polar residues over residues 129 to 166 (QNNV…PQNK), 179 to 191 (YASQ…TYQI), 203 to 223 (SLPQ…GQFN), and 362 to 385 (MMTT…RPNA). Disordered regions lie at residues 129–223 (QNNV…GQFN), 354–414 (SPAS…RRRH), 534–569 (NHNV…NSST), and 628–663 (GSNG…NGRG). Residues 386–400 (SVSQQRQQPVVSTPQ) show a composition bias toward low complexity. 2 stretches are compositionally biased toward polar residues: residues 535–554 (HNVN…SRGS) and 639–649 (GEASSSEANEL). Low complexity predominate over residues 650 to 662 (NGSNANGATTNGR).

The protein belongs to the ERT1/acuK family.

The protein resides in the nucleus. Functionally, transcription factor which regulates nonfermentable carbon utilization. Activator of gluconeogenetic genes. This Arthroderma gypseum (strain ATCC MYA-4604 / CBS 118893) (Microsporum gypseum) protein is Transcription activator of gluconeogenesis MGYG_02011.